A 134-amino-acid chain; its full sequence is Ribonuclease VapC (134 aa).

One can recognise a PINc domain in the interval 4–124; it reads IVDTSIIIAL…NTKDFKRIPE (121 aa). D6 contributes to the Mg(2+) binding site.

The protein belongs to the PINc/VapC protein family. It depends on Mg(2+) as a cofactor.

Its function is as follows. Toxic component of a type II toxin-antitoxin (TA) system. Has ssRNase activity. Its RNase activity is partially neutralized by cognate antitoxin VapB. Rapidly induces apoptosis upon microinjection into mouse fibroblasts (L929 line). Probably contributes to host cell death if bacterial cell lysis occurs during host infection. This Rickettsia bellii (strain RML369-C) protein is Ribonuclease VapC.